The following is a 379-amino-acid chain: 1-deoxy-D-xylulose 5-phosphate reductoisomerase (379 aa).

NADPH-binding residues include threonine 10, glycine 11, serine 12, isoleucine 13, asparagine 39, and asparagine 121. 1-deoxy-D-xylulose 5-phosphate is bound at residue lysine 122. Position 123 (glutamate 123) interacts with NADPH. Aspartate 147 is a Mn(2+) binding site. 4 residues coordinate 1-deoxy-D-xylulose 5-phosphate: serine 148, glutamate 149, serine 173, and histidine 196. A Mn(2+)-binding site is contributed by glutamate 149. Glycine 202 serves as a coordination point for NADPH. Serine 209, asparagine 214, lysine 215, and glutamate 218 together coordinate 1-deoxy-D-xylulose 5-phosphate. Glutamate 218 is a binding site for Mn(2+).

Belongs to the DXR family. Requires Mg(2+) as cofactor. Mn(2+) is required as a cofactor.

The enzyme catalyses 2-C-methyl-D-erythritol 4-phosphate + NADP(+) = 1-deoxy-D-xylulose 5-phosphate + NADPH + H(+). The protein operates within isoprenoid biosynthesis; isopentenyl diphosphate biosynthesis via DXP pathway; isopentenyl diphosphate from 1-deoxy-D-xylulose 5-phosphate: step 1/6. Catalyzes the NADPH-dependent rearrangement and reduction of 1-deoxy-D-xylulose-5-phosphate (DXP) to 2-C-methyl-D-erythritol 4-phosphate (MEP). The sequence is that of 1-deoxy-D-xylulose 5-phosphate reductoisomerase from Chlamydia caviae (strain ATCC VR-813 / DSM 19441 / 03DC25 / GPIC) (Chlamydophila caviae).